Reading from the N-terminus, the 398-residue chain is Phosphoglycerate kinase (398 aa).

Residues 20 to 22 (DLN), Arg35, 58 to 61 (HLGR), Arg118, and Arg155 contribute to the substrate site. ATP contacts are provided by residues Lys206, Gly295, Glu326, and 354–357 (GGDS).

The protein belongs to the phosphoglycerate kinase family. As to quaternary structure, monomer.

The protein localises to the cytoplasm. The catalysed reaction is (2R)-3-phosphoglycerate + ATP = (2R)-3-phospho-glyceroyl phosphate + ADP. It functions in the pathway carbohydrate degradation; glycolysis; pyruvate from D-glyceraldehyde 3-phosphate: step 2/5. The sequence is that of Phosphoglycerate kinase from Onion yellows phytoplasma (strain OY-M).